A 652-amino-acid chain; its full sequence is MNKYRRGLALGALALAVFILIGVGISMRATPQPVNLTQVLTDIRDGRVTEIHLANDGQAAEVTYTDESKTRVALPAGESLTTLLTDAGIPVERWPDIYPAGNGAISADLMLLLRILTIVAVGVVIFVLFRRFGPSSIGTTPTRRGSFEPIRPGERVITFDDVAGAEEVKEEVADIVDYLRDPERFRRLGARIPRGVLLTGPPGTGKTLLTRALAGEARASFFSVSGSEFVELYVGVGASRVRELFRKAKENAPAIIFIDEIDAIGRRRGRMEQSSEYDQTLNQILVEMDGFEERTTVVVVAATNRVDILDPALLRPGRFDRKVVVDLPDRKARRAILEVHARGKPLAENVNLDELAARTTGMTGADLANVINEAAILAARDRRETITNQDLLEALDRTLAGPARNARRFSERERRVVAYHEAGHAVVAHLLPHADPVRKVSIVSRGRAGGYTMIVPDEDRGLWTRAQLSDRLAALLGGLAAEELIFGDITTGSSNDLEQTTAIATSMVQRYGMGKRFGLLSTGAGSDLQQLSPQSAYTAEQEALELVQQAHQVALDVLRAHADDLERVAQRLLEVETIDGEELETLISPPRQLPVRRPVEQALPTPLHRAPIREGRRKGSAHRVGRAIGLVASFTRDAVESLRAAKPQIDRT.

At 1-6 (MNKYRR) the chain is on the cytoplasmic side. A helical transmembrane segment spans residues 7–27 (GLALGALALAVFILIGVGISM). Over 28 to 108 (RATPQPVNLT…PAGNGAISAD (81 aa)) the chain is Extracellular. Residues 109–129 (LMLLLRILTIVAVGVVIFVLF) form a helical membrane-spanning segment. Residues 130-652 (RRFGPSSIGT…RAAKPQIDRT (523 aa)) lie on the Cytoplasmic side of the membrane. 200 to 207 (GPPGTGKT) contributes to the ATP binding site. His-420 provides a ligand contact to Zn(2+). Residue Glu-421 is part of the active site. Positions 424 and 496 each coordinate Zn(2+).

It in the central section; belongs to the AAA ATPase family. In the C-terminal section; belongs to the peptidase M41 family. Homohexamer. Zn(2+) is required as a cofactor.

Its subcellular location is the cell membrane. Functionally, acts as a processive, ATP-dependent zinc metallopeptidase for both cytoplasmic and membrane proteins. Plays a role in the quality control of integral membrane proteins. The sequence is that of ATP-dependent zinc metalloprotease FtsH 2 from Sphaerobacter thermophilus (strain ATCC 49802 / DSM 20745 / KCCM 41009 / NCIMB 13125 / S 6022).